The sequence spans 226 residues: PKHD-type hydroxylase mma_3618 (226 aa).

In terms of domain architecture, Fe2OG dioxygenase spans 78–178; the sequence is RYMPPLFNRY…RISSFFWVQS (101 aa). Fe cation is bound by residues His96, Asp98, and His159. Arg169 lines the 2-oxoglutarate pocket.

Fe(2+) serves as cofactor. Requires L-ascorbate as cofactor.

This chain is PKHD-type hydroxylase mma_3618, found in Janthinobacterium sp. (strain Marseille) (Minibacterium massiliensis).